A 346-amino-acid polypeptide reads, in one-letter code: MRVADFSFDLPDELIARYPTAQRNASRLLTLSGENSELADKKFTDLFNLINPGDLMVFNNTRVIPARLFGQKSTGGKLEILVERMLDDKRILAHVRSSKSPKVDTLIDLDGGYQMKMLARHDALFELELQSDKTILEVLEDVGHMPLPPYIDRPDEDTDKERYQTVYNQTPGAVAAPTAGLHFDDAMLADLKAKGVNIAFVTLHVGAGTFQPVRVDNVLEHKMHSEWANVSQEVVDLIAQTKAAGNRVVAVGTTSVRSLESAARASGDSPLEAFSGDTDIFIYPGFQFKVVDAMVTNFHLPESTLIMLLSAFAGYEAVMKAYQHAITQKYRFFSYGDAMFVTKKAP.

Belongs to the QueA family. Monomer.

It is found in the cytoplasm. It carries out the reaction 7-aminomethyl-7-carbaguanosine(34) in tRNA + S-adenosyl-L-methionine = epoxyqueuosine(34) in tRNA + adenine + L-methionine + 2 H(+). It functions in the pathway tRNA modification; tRNA-queuosine biosynthesis. Its function is as follows. Transfers and isomerizes the ribose moiety from AdoMet to the 7-aminomethyl group of 7-deazaguanine (preQ1-tRNA) to give epoxyqueuosine (oQ-tRNA). This is S-adenosylmethionine:tRNA ribosyltransferase-isomerase from Shewanella frigidimarina (strain NCIMB 400).